The following is a 139-amino-acid chain: Large ribosomal subunit protein uL16 (139 aa).

Positions 1 to 19 are enriched in basic residues; the sequence is MLIPRKVKHRKQHHPKRSG. Positions 1 to 22 are disordered; sequence MLIPRKVKHRKQHHPKRSGVAK.

The protein belongs to the universal ribosomal protein uL16 family. Part of the 50S ribosomal subunit.

Its function is as follows. Binds 23S rRNA and is also seen to make contacts with the A and possibly P site tRNAs. This Acidothermus cellulolyticus (strain ATCC 43068 / DSM 8971 / 11B) protein is Large ribosomal subunit protein uL16.